We begin with the raw amino-acid sequence, 365 residues long: Ribosomal RNA large subunit methyltransferase F (365 aa).

Positions 1 to 50 (MSKPAVKSVPSATAKTATRAVNIRQKVKAPKQAKPEAKGRAKPSKDKPRA) are disordered. Residues 33–50 (AKPEAKGRAKPSKDKPRA) show a composition bias toward basic and acidic residues.

Belongs to the methyltransferase superfamily. METTL16/RlmF family.

Its subcellular location is the cytoplasm. The enzyme catalyses adenosine(1618) in 23S rRNA + S-adenosyl-L-methionine = N(6)-methyladenosine(1618) in 23S rRNA + S-adenosyl-L-homocysteine + H(+). In terms of biological role, specifically methylates the adenine in position 1618 of 23S rRNA. This chain is Ribosomal RNA large subunit methyltransferase F, found in Shewanella baltica (strain OS155 / ATCC BAA-1091).